Reading from the N-terminus, the 525-residue chain is Ankyrin repeat domain-containing protein SOWAHC (525 aa).

The disordered stretch occupies residues 84–263 (CEGPSEPSGD…EESSGGGSVT (180 aa)). Ser88 is subject to Phosphoserine. The span at 101–112 (AEPEAPDGPAGP) shows a compositional bias: low complexity. Phosphoserine occurs at positions 126, 213, and 226. Positions 230–241 (SSGGGRGRGGGD) are enriched in gly residues. Residues 242 to 251 (SDSASVASSS) are compositionally biased toward low complexity. ANK repeat units follow at residues 301–330 (TGFTCLHWAAKHGRQELLAMLVNFANKHQL) and 340–370 (GGYTALHLAAMHGHVEVVKLLVGAYDADVDI). Residues 434 to 525 (DGGDHHHHHH…TLRPKSNVFG (92 aa)) form a disordered region. Residues 468–477 (IKPRLNKIRF) show a composition bias toward basic residues. Residues 489 to 509 (RDPEQPLEGRGEEGVGEERPV) are compositionally biased toward basic and acidic residues.

It belongs to the SOWAH family.

The sequence is that of Ankyrin repeat domain-containing protein SOWAHC (SOWAHC) from Homo sapiens (Human).